Reading from the N-terminus, the 262-residue chain is Orotidine 5'-phosphate decarboxylase (262 aa).

Substrate-binding positions include D35, 57-59 (KTH), 89-98 (DRKFADIGNT), Y215, and R233. Catalysis depends on K91, which acts as the Proton donor.

This sequence belongs to the OMP decarboxylase family.

The enzyme catalyses orotidine 5'-phosphate + H(+) = UMP + CO2. It functions in the pathway pyrimidine metabolism; UMP biosynthesis via de novo pathway; UMP from orotate: step 2/2. The polypeptide is Orotidine 5'-phosphate decarboxylase (URA3) (Pichia kudriavzevii (Yeast)).